A 72-amino-acid chain; its full sequence is DNA-directed RNA polymerase subunit omega (72 aa).

Belongs to the RNA polymerase subunit omega family. As to quaternary structure, the RNAP catalytic core consists of 2 alpha, 1 beta, 1 beta' and 1 omega subunit. When a sigma factor is associated with the core the holoenzyme is formed, which can initiate transcription.

The catalysed reaction is RNA(n) + a ribonucleoside 5'-triphosphate = RNA(n+1) + diphosphate. Functionally, promotes RNA polymerase assembly. Latches the N- and C-terminal regions of the beta' subunit thereby facilitating its interaction with the beta and alpha subunits. The sequence is that of DNA-directed RNA polymerase subunit omega from Petrotoga mobilis (strain DSM 10674 / SJ95).